The sequence spans 81 residues: uncharacterized protein (81 aa).

Positions 1–24 are cleaved as a signal peptide; the sequence is MRKILKIVSLLILLLLLVYSFFSP. Residues 25 to 28 lie on the Extracellular side of the membrane; sequence NSQL. Residues 29 to 49 traverse the membrane as a helical segment; sequence FVFVQLIIIAFLIGFGINCFV. Residues 50 to 81 lie on the Cytoplasmic side of the membrane; it reads KKERYQGTLYFVIAICNITINLDKINELIQSI.

Its subcellular location is the cell membrane. This is an uncharacterized protein from Bacillus subtilis (strain 168).